A 276-amino-acid polypeptide reads, in one-letter code: Large ribosomal subunit protein uL2 (276 aa).

Residues Thr-219–Lys-276 form a disordered region.

It belongs to the universal ribosomal protein uL2 family. In terms of assembly, part of the 50S ribosomal subunit. Forms a bridge to the 30S subunit in the 70S ribosome.

In terms of biological role, one of the primary rRNA binding proteins. Required for association of the 30S and 50S subunits to form the 70S ribosome, for tRNA binding and peptide bond formation. It has been suggested to have peptidyltransferase activity; this is somewhat controversial. Makes several contacts with the 16S rRNA in the 70S ribosome. This chain is Large ribosomal subunit protein uL2, found in Alkaliphilus oremlandii (strain OhILAs) (Clostridium oremlandii (strain OhILAs)).